Reading from the N-terminus, the 281-residue chain is Diaminopimelate epimerase (281 aa).

Substrate-binding residues include Asn-13 and Asn-66. Cys-75 (proton donor) is an active-site residue. Substrate-binding positions include 76–77, Asn-164, Asn-197, and 215–216; these read GN and ER. The active-site Proton acceptor is Cys-224. 225-226 provides a ligand contact to substrate; that stretch reads GT.

Belongs to the diaminopimelate epimerase family. As to quaternary structure, homodimer.

It is found in the cytoplasm. The catalysed reaction is (2S,6S)-2,6-diaminopimelate = meso-2,6-diaminopimelate. The protein operates within amino-acid biosynthesis; L-lysine biosynthesis via DAP pathway; DL-2,6-diaminopimelate from LL-2,6-diaminopimelate: step 1/1. Functionally, catalyzes the stereoinversion of LL-2,6-diaminopimelate (L,L-DAP) to meso-diaminopimelate (meso-DAP), a precursor of L-lysine and an essential component of the bacterial peptidoglycan. This chain is Diaminopimelate epimerase, found in Microcystis aeruginosa (strain NIES-843 / IAM M-2473).